The primary structure comprises 397 residues: Homoserine O-acetyltransferase (397 aa).

The region spanning 58–368 (NAVLVLHALT…EAKWGHDAFL (311 aa)) is the AB hydrolase-1 domain. S164 acts as the Nucleophile in catalysis. R233 lines the substrate pocket. Catalysis depends on residues D331 and H364. A substrate-binding site is contributed by D365.

Belongs to the AB hydrolase superfamily. MetX family. As to quaternary structure, homodimer.

The protein resides in the cytoplasm. The catalysed reaction is L-homoserine + acetyl-CoA = O-acetyl-L-homoserine + CoA. It functions in the pathway amino-acid biosynthesis; L-methionine biosynthesis via de novo pathway; O-acetyl-L-homoserine from L-homoserine: step 1/1. Functionally, transfers an acetyl group from acetyl-CoA to L-homoserine, forming acetyl-L-homoserine. The chain is Homoserine O-acetyltransferase from Solidesulfovibrio magneticus (strain ATCC 700980 / DSM 13731 / RS-1) (Desulfovibrio magneticus).